The chain runs to 65 residues: Large ribosomal subunit protein bL35 (65 aa).

The span at 1 to 16 (MPKQKTHRASAKRFKR) shows a compositional bias: basic residues. The interval 1 to 21 (MPKQKTHRASAKRFKRTGSGG) is disordered.

This sequence belongs to the bacterial ribosomal protein bL35 family.

In Streptococcus pyogenes serotype M18 (strain MGAS8232), this protein is Large ribosomal subunit protein bL35.